The primary structure comprises 105 residues: Endogenous retrovirus group K member 6 Rec protein (105 aa).

A disordered region spans residues Met-1 to Thr-49. The span at Ala-10 to Arg-20 shows a compositional bias: basic residues. The Nuclear localization signal motif lies at Arg-13–Arg-20. Positions Trp-50–Leu-59 match the Nuclear export signal motif.

In terms of assembly, forms homodimers, homotrimers, and homotetramers via a C-terminal domain. Associates with XPO1 and with ZNF145. As to expression, expressed at higher level in placenta, expressed at lower level in several organs and cell lines.

The protein localises to the cytoplasm. Its subcellular location is the nucleus. It localises to the nucleolus. Retroviral replication requires the nuclear export and translation of unspliced, singly-spliced and multiply-spliced derivatives of the initial genomic transcript. Rec interacts with a highly structured RNA element (RcRE) present in the viral 3'LTR and recruits the cellular nuclear export machinery. This permits export to the cytoplasm of unspliced genomic or incompletely spliced subgenomic viral transcripts. The chain is Endogenous retrovirus group K member 6 Rec protein (ERVK-6) from Homo sapiens (Human).